Here is an 847-residue protein sequence, read N- to C-terminus: Alanine--tRNA ligase (847 aa).

Zn(2+) contacts are provided by His-554, His-558, Cys-656, and His-660.

Belongs to the class-II aminoacyl-tRNA synthetase family. Zn(2+) is required as a cofactor.

The protein resides in the cytoplasm. It catalyses the reaction tRNA(Ala) + L-alanine + ATP = L-alanyl-tRNA(Ala) + AMP + diphosphate. Its function is as follows. Catalyzes the attachment of alanine to tRNA(Ala) in a two-step reaction: alanine is first activated by ATP to form Ala-AMP and then transferred to the acceptor end of tRNA(Ala). Also edits incorrectly charged Ser-tRNA(Ala) and Gly-tRNA(Ala) via its editing domain. The protein is Alanine--tRNA ligase of Helicobacter pylori (strain Shi470).